A 691-amino-acid polypeptide reads, in one-letter code: Lipase 2 (691 aa).

An N-terminal signal peptide occupies residues 1 to 37 (MLRGQEERKYSIRKYSIGVVSVLAATMFVVTSHEAQA). The tract at residues 34–267 (EAQASEKIPT…KPTDKNTDNK (234 aa)) is disordered. Residues 38–296 (SEKIPTTNAA…ADAKKVRPLK (259 aa)) constitute a propeptide that is removed on maturation. Residues 41-72 (IPTTNAAAQKETLNQPGEQGNAITSHQMQSGK) are compositionally biased toward polar residues. Basic and acidic residues predominate over residues 73–82 (QLDDMHKENG). Composition is skewed to polar residues over residues 94-115 (LQSSKHQSTQNSKIIRTQNDNQ), 125-135 (SKQSHQNNATN), 142-172 (DQIQNTHHAERNGSQSTTSQSNDVDKSQPSI), and 186-196 (PTSTTPPSNDK). Composition is skewed to basic and acidic residues over residues 197–214 (TAPKSTKEQDATTDKHPN) and 258–267 (KPTDKNTDNK). Ser-413 functions as the Nucleophile in the catalytic mechanism. Ca(2+) is bound at residue Gly-580. The Charge relay system role is filled by Asp-604. Asp-645 serves as a coordination point for Ca(2+). His-646 functions as the Charge relay system in the catalytic mechanism. The Ca(2+) site is built by Asp-648, Asp-653, and Asp-656.

Belongs to the AB hydrolase superfamily. Lipase family.

The protein resides in the secreted. The catalysed reaction is a triacylglycerol + H2O = a diacylglycerol + a fatty acid + H(+). The polypeptide is Lipase 2 (lip2) (Staphylococcus aureus (strain MRSA252)).